The following is a 288-amino-acid chain: 4-diphosphocytidyl-2-C-methyl-D-erythritol kinase (288 aa).

The active site involves K8. ATP is bound at residue 92-102; that stretch reads PVAAGMAGGST. Residue D134 is part of the active site.

The protein belongs to the GHMP kinase family. IspE subfamily.

It carries out the reaction 4-CDP-2-C-methyl-D-erythritol + ATP = 4-CDP-2-C-methyl-D-erythritol 2-phosphate + ADP + H(+). Its pathway is isoprenoid biosynthesis; isopentenyl diphosphate biosynthesis via DXP pathway; isopentenyl diphosphate from 1-deoxy-D-xylulose 5-phosphate: step 3/6. Catalyzes the phosphorylation of the position 2 hydroxy group of 4-diphosphocytidyl-2C-methyl-D-erythritol. This is 4-diphosphocytidyl-2-C-methyl-D-erythritol kinase from Clostridium perfringens (strain ATCC 13124 / DSM 756 / JCM 1290 / NCIMB 6125 / NCTC 8237 / Type A).